Reading from the N-terminus, the 433-residue chain is Acetyl-CoA acetyltransferase erg10A, mitochondrial (433 aa).

The N-terminal 34 residues, 1–34, are a transit peptide targeting the mitochondrion; that stretch reads MAIQTTTGLAARLVAKRATFPASRRNFSASRSAL. Catalysis depends on C124, which acts as the Acyl-thioester intermediate. Y219 contacts K(+). Residues N229 and K262 each contribute to the CoA site. A280 serves as a coordination point for K(+). S284 is a binding site for CoA. Catalysis depends on proton acceptor residues H387 and C415. N416 contacts chloride.

This sequence belongs to the thiolase-like superfamily. Thiolase family. In terms of assembly, homotetramer. K(+) serves as cofactor.

The protein localises to the mitochondrion. The catalysed reaction is 2 acetyl-CoA = acetoacetyl-CoA + CoA. The protein operates within metabolic intermediate biosynthesis; (R)-mevalonate biosynthesis; (R)-mevalonate from acetyl-CoA: step 1/3. Its function is as follows. Mitochondrial acetyl-CoA acetyltransferase that catalyzes both the formation and degradation of acetoacetyl-CoA. Has no overlapping function with erg10B and seems not to be involved in ergosterol biosynthesis. Plays an important role in growth, morphogenesis and maintaining mitochondrial function including the response to oxidative stresses. The protein is Acetyl-CoA acetyltransferase erg10A, mitochondrial of Aspergillus fumigatus (strain ATCC MYA-4609 / CBS 101355 / FGSC A1100 / Af293) (Neosartorya fumigata).